Reading from the N-terminus, the 180-residue chain is Anaerobic nitrite reductase GLB0 (180 aa).

The region spanning 23–172 is the Globin domain; the sequence is TYSKENEQLV…LAEQVKAEMH (150 aa). Residues 56–60 carry the Homodimerization motif; the sequence is EIAPG. Positions 66, 80, 84, 114, 118, and 119 each coordinate heme b. The Homodimerization motif lies at 126–138; the sequence is DDQFEIVKEAILY.

The protein belongs to the plant globin family. As to quaternary structure, homodimer. Requires heme b as cofactor.

It is found in the cytoplasm. It localises to the nucleus. It carries out the reaction Fe(III)-heme b-[protein] + nitric oxide + H2O = Fe(II)-heme b-[protein] + nitrite + 2 H(+). Its function is as follows. Phytoglobin that reduces nitrite to nitric oxide (NO) under anoxic conditions (e.g. during flooding or in waterlogged soil). May not function as an oxygen storage or transport protein. Has an unusually high affinity for O(2) through an hexacoordinate heme iron because of a very low dissociation constant. The polypeptide is Anaerobic nitrite reductase GLB0 (Physcomitrium patens (Spreading-leaved earth moss)).